Here is a 229-residue protein sequence, read N- to C-terminus: MTPQLLLALVLWASCPPCSGRKGPPAALTLPRVQCRASRYPIAVDCSWTLPPAPNSTSPVSFIATYRLGMAARGHSWPCLQQTPTSTSCTITDVQLFSMAPYVLNVTAVHPWGSSSSFVPFITEHIIKPDPPEGVRLSPLAERQLQVQWEPPGSWPFPEIFSLKYWIRYKRQGAARFHRVGPIEATSFILRAVRPRARYYVQVAAQDLTDYGELSDWSLPATATMSLGK.

Residues 1-20 (MTPQLLLALVLWASCPPCSG) form the signal peptide. 2 Fibronectin type-III domains span residues 24–130 (PPAA…IKPD) and 131–227 (PPEG…TMSL). N-linked (GlcNAc...) asparagine glycans are attached at residues Asn55 and Asn105.

Belongs to the type I cytokine receptor family. Type 3 subfamily. As to quaternary structure, heterodimer with IL27/IL27A; not disulfide-linked. This heterodimer is known as interleukin IL-27. Heterodimer with IL12A; not disulfide-linked. This heterodimer is known as interleukin IL-35. Interacts with SQSTM1.

The protein localises to the secreted. Associates with IL27 to form the IL-27 interleukin, a heterodimeric cytokine which functions in innate immunity. IL-27 has pro- and anti-inflammatory properties, that can regulate T-helper cell development, suppress T-cell proliferation, stimulate cytotoxic T-cell activity, induce isotype switching in B-cells, and that has diverse effects on innate immune cells. Among its target cells are CD4 T-helper cells which can differentiate in type 1 effector cells (TH1), type 2 effector cells (TH2) and IL17 producing helper T-cells (TH17). It drives rapid clonal expansion of naive but not memory CD4 T-cells. It also strongly synergizes with IL-12 to trigger interferon-gamma/IFN-gamma production of naive CD4 T-cells, binds to the cytokine receptor WSX-1/TCCR. Another important role of IL-27 is its antitumor activity as well as its antiangiogenic activity with activation of production of antiangiogenic chemokines. The sequence is that of Interleukin-27 subunit beta (EBI3) from Homo sapiens (Human).